Reading from the N-terminus, the 112-residue chain is 2Fe-2S ferredoxin (112 aa).

In terms of domain architecture, 2Fe-2S ferredoxin-type spans 5-107 (IKVTFIINDG…GIKVRIPATT (103 aa)). 4 residues coordinate [2Fe-2S] cluster: cysteine 42, cysteine 48, cysteine 51, and cysteine 88.

Belongs to the adrenodoxin/putidaredoxin family. Requires [2Fe-2S] cluster as cofactor.

In terms of biological role, ferredoxin are iron-sulfur proteins that transfer electrons in a wide variety of metabolic reactions. The polypeptide is 2Fe-2S ferredoxin (fdxB) (Rickettsia conorii (strain ATCC VR-613 / Malish 7)).